A 408-amino-acid polypeptide reads, in one-letter code: Dihydrolipoyllysine-residue acetyltransferase component of pyruvate dehydrogenase complex (408 aa).

In terms of domain architecture, Lipoyl-binding spans 2–78 (PIKILMPALS…PVNSLIAVLS (77 aa)). K43 is modified (N6-lipoyllysine). The region spanning 128-165 (FASPLAKRLAKIGDIRLENVQGSGPHGRIVKQDILSYD) is the Peripheral subunit-binding (PSBD) domain. H381 is an active-site residue.

Belongs to the 2-oxoacid dehydrogenase family. Forms a 24-polypeptide structural core with octahedral symmetry. (R)-lipoate is required as a cofactor.

It carries out the reaction N(6)-[(R)-dihydrolipoyl]-L-lysyl-[protein] + acetyl-CoA = N(6)-[(R)-S(8)-acetyldihydrolipoyl]-L-lysyl-[protein] + CoA. The pyruvate dehydrogenase complex catalyzes the overall conversion of pyruvate to acetyl-CoA and CO(2). It contains multiple copies of three enzymatic components: pyruvate dehydrogenase (E1), dihydrolipoamide acetyltransferase (E2) and lipoamide dehydrogenase (E3). The chain is Dihydrolipoyllysine-residue acetyltransferase component of pyruvate dehydrogenase complex (pdhC) from Rickettsia prowazekii (strain Madrid E).